The following is a 533-amino-acid chain: Undecaprenyl phosphate-alpha-4-amino-4-deoxy-L-arabinose arabinosyl transferase (533 aa).

Helical transmembrane passes span 10–30 (LLLAAFLLAYLLPLGFHGLWI), 64–84 (PAGYWLIALGQAVFGENLFGV), 86–106 (IASAISTGLSVLLAYLLAGKI), 113–133 (SFASALLFMSFGFVAGQAGYS), 137–157 (PQFTLWTNLTLVAFWYAVHSI), 170–190 (VACGMGFMTKGFLAWALPAII), 207–227 (FGPLAVVIAIAVCLPWALAVH), 257–277 (WWFYLPLLIAACLPWALLLPV), 290–310 (DTAFLLLWLVLPLAFLSLSKG), 312–332 (LPTYILPCLLPLALLMADALV), 345–365 (VNGIVNAALTFLGLLALIYVQ), 377–397 (HLLLAVIVLTGWTLTNALQGI), and 402–422 (FWALPAVGSWLLIVLLPAALP).

Belongs to the glycosyltransferase 83 family.

It localises to the cell inner membrane. The enzyme catalyses 4-amino-4-deoxy-alpha-L-arabinopyranosyl di-trans,octa-cis-undecaprenyl phosphate + lipid IVA = lipid IIA + di-trans,octa-cis-undecaprenyl phosphate.. It functions in the pathway lipopolysaccharide metabolism; 4-amino-4-deoxy-beta-L-arabinose-lipid A biosynthesis. Its function is as follows. Catalyzes the transfer of the L-Ara4N moiety of the glycolipid undecaprenyl phosphate-alpha-L-Ara4N to lipid A. The modified arabinose is attached to lipid A and is required for resistance to polymyxin and cationic antimicrobial peptides. The polypeptide is Undecaprenyl phosphate-alpha-4-amino-4-deoxy-L-arabinose arabinosyl transferase (Pseudomonas savastanoi pv. phaseolicola (strain 1448A / Race 6) (Pseudomonas syringae pv. phaseolicola (strain 1448A / Race 6))).